We begin with the raw amino-acid sequence, 361 residues long: tRNA/tmRNA (uracil-C(5))-methyltransferase (361 aa).

S-adenosyl-L-methionine-binding residues include Gln-185, Tyr-213, Asn-218, Glu-234, and Asp-294. Cys-319 acts as the Nucleophile in catalysis. Glu-353 (proton acceptor) is an active-site residue.

It belongs to the class I-like SAM-binding methyltransferase superfamily. RNA M5U methyltransferase family. TrmA subfamily.

It catalyses the reaction uridine(54) in tRNA + S-adenosyl-L-methionine = 5-methyluridine(54) in tRNA + S-adenosyl-L-homocysteine + H(+). The catalysed reaction is uridine(341) in tmRNA + S-adenosyl-L-methionine = 5-methyluridine(341) in tmRNA + S-adenosyl-L-homocysteine + H(+). Functionally, dual-specificity methyltransferase that catalyzes the formation of 5-methyluridine at position 54 (m5U54) in all tRNAs, and that of position 341 (m5U341) in tmRNA (transfer-mRNA). The protein is tRNA/tmRNA (uracil-C(5))-methyltransferase of Pseudomonas entomophila (strain L48).